The chain runs to 261 residues: uncharacterized protein (261 aa).

The protein belongs to the PaiB family.

This is an uncharacterized protein from Aspergillus fumigatus (strain ATCC MYA-4609 / CBS 101355 / FGSC A1100 / Af293) (Neosartorya fumigata).